The chain runs to 152 residues: Small ribosomal subunit protein uS15 (152 aa).

Belongs to the universal ribosomal protein uS15 family. Part of the 30S ribosomal subunit.

The sequence is that of Small ribosomal subunit protein uS15 from Saccharolobus solfataricus (strain ATCC 35092 / DSM 1617 / JCM 11322 / P2) (Sulfolobus solfataricus).